The following is a 235-amino-acid chain: Sugar fermentation stimulation protein homolog (235 aa).

Belongs to the SfsA family.

This chain is Sugar fermentation stimulation protein homolog, found in Bartonella henselae (strain ATCC 49882 / DSM 28221 / CCUG 30454 / Houston 1) (Rochalimaea henselae).